The primary structure comprises 608 residues: Threonine--tRNA ligase (608 aa).

The segment at 1–143 (MRVLYIHAER…VFKPEEAKTE (143 aa)) is editing domain. 2 catalytic regions span residues 194-490 (PKYL…PRLP) and 195-490 (KYLD…PRLP). Positions 287, 338, and 459 each coordinate Zn(2+).

This sequence belongs to the class-II aminoacyl-tRNA synthetase family. In terms of assembly, homodimer. Zn(2+) serves as cofactor.

The protein resides in the cytoplasm. The catalysed reaction is tRNA(Thr) + L-threonine + ATP = L-threonyl-tRNA(Thr) + AMP + diphosphate + H(+). In terms of biological role, catalyzes the attachment of threonine to tRNA(Thr) in a two-step reaction: L-threonine is first activated by ATP to form Thr-AMP and then transferred to the acceptor end of tRNA(Thr). Also edits incorrectly charged L-seryl-tRNA(Thr). This chain is Threonine--tRNA ligase, found in Pyrobaculum arsenaticum (strain DSM 13514 / JCM 11321 / PZ6).